We begin with the raw amino-acid sequence, 509 residues long: Maturase K (509 aa).

It belongs to the intron maturase 2 family. MatK subfamily.

The protein localises to the plastid. It is found in the chloroplast. In terms of biological role, usually encoded in the trnK tRNA gene intron. Probably assists in splicing its own and other chloroplast group II introns. The chain is Maturase K from Otacanthus azureus (Brazilian snapdragon).